A 599-amino-acid chain; its full sequence is Elongation factor 4 (599 aa).

The tr-type G domain maps to Lys-2–Glu-184. GTP contacts are provided by residues Asp-14–Thr-19 and Asn-131–Asp-134.

Belongs to the TRAFAC class translation factor GTPase superfamily. Classic translation factor GTPase family. LepA subfamily.

The protein localises to the cell inner membrane. The enzyme catalyses GTP + H2O = GDP + phosphate + H(+). Its function is as follows. Required for accurate and efficient protein synthesis under certain stress conditions. May act as a fidelity factor of the translation reaction, by catalyzing a one-codon backward translocation of tRNAs on improperly translocated ribosomes. Back-translocation proceeds from a post-translocation (POST) complex to a pre-translocation (PRE) complex, thus giving elongation factor G a second chance to translocate the tRNAs correctly. Binds to ribosomes in a GTP-dependent manner. This chain is Elongation factor 4, found in Klebsiella pneumoniae (strain 342).